Reading from the N-terminus, the 175-residue chain is uncharacterized protein (175 aa).

2 helical membrane-spanning segments follow: residues 21–41 (IVLD…MGPI) and 50–70 (LVGL…VFVI).

It is found in the membrane. This is an uncharacterized protein from Saccharomyces cerevisiae (strain ATCC 204508 / S288c) (Baker's yeast).